The chain runs to 171 residues: Adenine phosphoribosyltransferase (171 aa).

Belongs to the purine/pyrimidine phosphoribosyltransferase family. Homodimer.

Its subcellular location is the cytoplasm. It carries out the reaction AMP + diphosphate = 5-phospho-alpha-D-ribose 1-diphosphate + adenine. Its pathway is purine metabolism; AMP biosynthesis via salvage pathway; AMP from adenine: step 1/1. In terms of biological role, catalyzes a salvage reaction resulting in the formation of AMP, that is energically less costly than de novo synthesis. This Rhodospirillum rubrum (strain ATCC 11170 / ATH 1.1.1 / DSM 467 / LMG 4362 / NCIMB 8255 / S1) protein is Adenine phosphoribosyltransferase.